The following is a 573-amino-acid chain: DEAD-box ATP-dependent RNA helicase 47A (573 aa).

The Q motif motif lies at 131 to 159 (KSFEELGLPPLLIDRLNKEGLTAPTEVQS). One can recognise a Helicase ATP-binding domain in the interval 162 to 362 (IPIISQKHDA…RSWGHDPVLV (201 aa)). 175–182 (SYTGSGKT) contacts ATP. Positions 293–296 (DEVD) match the DEAD box motif. One can recognise a Helicase C-terminal domain in the interval 421–565 (TLRRCIHALE…PCEFTEGKLL (145 aa)).

This sequence belongs to the DEAD box helicase family.

The catalysed reaction is ATP + H2O = ADP + phosphate + H(+). In Oryza sativa subsp. japonica (Rice), this protein is DEAD-box ATP-dependent RNA helicase 47A.